Reading from the N-terminus, the 74-residue chain is Fulgimotoxin (74 aa).

Gln-1 carries the post-translational modification Pyrrolidone carboxylic acid. Disulfide bonds link Cys-10–Cys-34, Cys-13–Cys-21, Cys-27–Cys-51, Cys-55–Cys-66, and Cys-67–Cys-72.

It belongs to the three-finger toxin family. Ancestral subfamily. Boigatoxin sub-subfamily. In terms of assembly, monomer. Post-translationally, the N-terminus is blocked. Contains 5 disulfide bonds. As to expression, expressed by the venom gland.

Its subcellular location is the secreted. Reptile-specific three-finger toxin that is lethal at low doses for lizards, but not for mice. Probably acts as a neurotoxin. This is Fulgimotoxin from Oxybelis fulgidus (Green vine snake).